The following is an 856-amino-acid chain: Alginate lyase 7 (856 aa).

PbH1 repeat units lie at residues 133-155 (DYNV…DPHE), 157-179 (TINL…VADF), 180-202 (QIGA…NIVT), 204-226 (SHDI…VVQR), 234-256 (VYNV…LIKM), 257-279 (STDV…RVQG), 280-304 (VEDV…EVIV), and 320-342 (TQNV…GIQE). Hemolysin-type calcium-binding repeat units follow at residues 387–402 (GSTG…IADL), 404–421 (VGGS…NDVL), 422–439 (EGGA…ADIF), 538–549 (GTEGDDSLTGNA), 554–563 (LDGGSGNDSL), 565–581 (GGLG…DDIL), 582–599 (NGGL…ADIF), 715–731 (GGAG…DDIL), and 733–749 (GGSE…ADVF).

This sequence belongs to the D-mannuronate C5-epimerase family. It depends on Ca(2+) as a cofactor.

The protein resides in the secreted. The enzyme catalyses Eliminative cleavage of alginate to give oligosaccharides with 4-deoxy-alpha-L-erythro-hex-4-enuronosyl groups at their non-reducing ends and beta-D-mannuronate at their reducing end.. It carries out the reaction [(1-&gt;4)-beta-D-mannuronosyl](n) = [alginate](n). The protein operates within glycan biosynthesis; alginate biosynthesis. Inhibited by zinc. In terms of biological role, converts beta-D-mannuronic acid (M) to alpha-L-guluronic acid (G). Has both epimerase and lyase activities. Contributes to abortive encystment by degrading the coat from inside the cyst. Important for cyst germination. The polypeptide is Alginate lyase 7 (Azotobacter vinelandii).